We begin with the raw amino-acid sequence, 208 residues long: Uridine kinase (208 aa).

11-18 provides a ligand contact to ATP; sequence GGTGSGKS.

The protein belongs to the uridine kinase family.

The protein resides in the cytoplasm. It catalyses the reaction uridine + ATP = UMP + ADP + H(+). The catalysed reaction is cytidine + ATP = CMP + ADP + H(+). It participates in pyrimidine metabolism; CTP biosynthesis via salvage pathway; CTP from cytidine: step 1/3. Its pathway is pyrimidine metabolism; UMP biosynthesis via salvage pathway; UMP from uridine: step 1/1. This Clostridium novyi (strain NT) protein is Uridine kinase.